Reading from the N-terminus, the 250-residue chain is tRNA (guanine-N(1)-)-methyltransferase (250 aa).

S-adenosyl-L-methionine contacts are provided by residues Gly-116 and 136–141 (IGDYVL).

It belongs to the RNA methyltransferase TrmD family. In terms of assembly, homodimer.

It is found in the cytoplasm. It carries out the reaction guanosine(37) in tRNA + S-adenosyl-L-methionine = N(1)-methylguanosine(37) in tRNA + S-adenosyl-L-homocysteine + H(+). Its function is as follows. Specifically methylates guanosine-37 in various tRNAs. The polypeptide is tRNA (guanine-N(1)-)-methyltransferase (Pseudomonas syringae pv. tomato (strain ATCC BAA-871 / DC3000)).